The following is a 469-amino-acid chain: Argininosuccinate lyase (469 aa).

Belongs to the lyase 1 family. Argininosuccinate lyase subfamily.

Its subcellular location is the cytoplasm. It catalyses the reaction 2-(N(omega)-L-arginino)succinate = fumarate + L-arginine. The protein operates within amino-acid biosynthesis; L-arginine biosynthesis; L-arginine from L-ornithine and carbamoyl phosphate: step 3/3. The sequence is that of Argininosuccinate lyase from Burkholderia thailandensis (strain ATCC 700388 / DSM 13276 / CCUG 48851 / CIP 106301 / E264).